Reading from the N-terminus, the 304-residue chain is Protein INO2 (304 aa).

In terms of domain architecture, bHLH spans 236–290 (VRKWKHVQMEKIRRINTKEAFERLIKSVRTPPKENGKRIPKHILLTCVMNDIKSI).

Efficient DNA binding requires dimerization with another bHLH protein.

The protein localises to the nucleus. Positive regulatory factor required for depression of the coregulated phospholipid biosynthetic enzymes. Also involved in the expression of ITR1. The chain is Protein INO2 (INO2) from Saccharomyces cerevisiae (strain ATCC 204508 / S288c) (Baker's yeast).